Consider the following 408-residue polypeptide: Interferon-activable protein 203 (408 aa).

The 87-residue stretch at 1 to 87 (MAEYKNIVLL…AKKLKTEKAK (87 aa)) folds into the Pyrin domain. The interval 84–208 (EKAKVQEKKK…EGHHQGPKQV (125 aa)) is disordered. Basic residues predominate over residues 92–102 (KKGKCKTAGKK). A compositionally biased stretch (polar residues) spans 150 to 159 (AQLPETSGTN). An HIN-200 domain is found at 190-388 (TVPKEPSREE…SVRHSYMQVI (199 aa)).

This sequence belongs to the HIN-200 family. In terms of tissue distribution, constitutively expressed in the thymus, bone marrow and spleen. Isoform 1 and isoform 3 are present in liver (at protein level).

It localises to the nucleus. This Mus musculus (Mouse) protein is Interferon-activable protein 203 (Ifi203).